We begin with the raw amino-acid sequence, 129 residues long: Small ribosomal subunit protein uS11 (129 aa).

The protein belongs to the universal ribosomal protein uS11 family. In terms of assembly, part of the 30S ribosomal subunit. Interacts with proteins S7 and S18. Binds to IF-3.

Its function is as follows. Located on the platform of the 30S subunit, it bridges several disparate RNA helices of the 16S rRNA. Forms part of the Shine-Dalgarno cleft in the 70S ribosome. The protein is Small ribosomal subunit protein uS11 of Pseudomonas fluorescens (strain ATCC BAA-477 / NRRL B-23932 / Pf-5).